A 116-amino-acid chain; its full sequence is Vitelline membrane protein Vm32E (116 aa).

The signal sequence occupies residues 1–17; sequence MKIVAFTLVAFVALAGA. Positions 36–73 constitute a VM domain; the sequence is GYPAPPCPTNYLFSCQPNLAPAPCAQEAPAYGSAGAYT.

It belongs to the vitelline membrane family.

The protein resides in the secreted. In terms of biological role, major early eggshell protein. The sequence is that of Vitelline membrane protein Vm32E from Drosophila santomea (Fruit fly).